A 150-amino-acid polypeptide reads, in one-letter code: Ribonuclease K6 (150 aa).

An N-terminal signal peptide occupies residues 1–23 (MVLCFPLLLLLLVLWGPVCPLHA). His38 serves as the catalytic Proton acceptor. 4 cysteine pairs are disulfide-bonded: Cys46-Cys104, Cys60-Cys114, Cys78-Cys129, and Cys85-Cys92. The N-linked (GlcNAc...) asparagine glycan is linked to Asn55. Residues 61–65 (KHQNT) and Lys86 each bind substrate. Asn100 is a glycosylation site (N-linked (GlcNAc...) asparagine). Arg105 provides a ligand contact to substrate. His145 (proton donor) is an active-site residue.

Belongs to the pancreatic ribonuclease family. Interacts (via N-terminus) with bacterial lipopolysaccharide (LPS).

Its subcellular location is the secreted. It localises to the lysosome. It is found in the cytoplasmic granule. Functionally, ribonuclease which shows a preference for the pyrimidines uridine and cytosine. Has potent antibacterial activity against a range of Gram-positive and Gram-negative bacteria, including P.aeruginosa, A.baumanii, M.luteus, S.aureus, E.faecalis, E.faecium, S.saprophyticus and E.coli. Causes loss of bacterial membrane integrity, and also promotes agglutination of Gram-negative bacteria. Probably contributes to urinary tract sterility. Bactericidal activity is independent of RNase activity. The sequence is that of Ribonuclease K6 (RNASE6) from Pongo pygmaeus (Bornean orangutan).